The sequence spans 321 residues: 5,10-methylenetetrahydromethanopterin reductase (321 aa).

The protein belongs to the mer family. As to quaternary structure, homotetramer.

It localises to the cytoplasm. The enzyme catalyses 5-methyl-5,6,7,8-tetrahydromethanopterin + oxidized coenzyme F420-(gamma-L-Glu)(n) + H(+) = 5,10-methylenetetrahydromethanopterin + reduced coenzyme F420-(gamma-L-Glu)(n). It participates in one-carbon metabolism; methanogenesis from CO(2); methyl-coenzyme M from 5,10-methylene-5,6,7,8-tetrahydromethanopterin: step 1/2. Catalyzes the reversible reduction of methylene-H(4)MPT to methyl-H(4)MPT. The polypeptide is 5,10-methylenetetrahydromethanopterin reductase (Methanothermobacter marburgensis (strain ATCC BAA-927 / DSM 2133 / JCM 14651 / NBRC 100331 / OCM 82 / Marburg) (Methanobacterium thermoautotrophicum)).